A 642-amino-acid chain; its full sequence is Threonine--tRNA ligase (642 aa).

Residues 1-61 (MPVITLPDGS…ETDSDLSIIT (61 aa)) form the TGS domain. The tract at residues 243–534 (DHRKIGKQLD…LIEEYAGKFP (292 aa)) is catalytic. The Zn(2+) site is built by Cys-334, His-385, and His-511.

The protein belongs to the class-II aminoacyl-tRNA synthetase family. In terms of assembly, homodimer. The cofactor is Zn(2+).

Its subcellular location is the cytoplasm. It carries out the reaction tRNA(Thr) + L-threonine + ATP = L-threonyl-tRNA(Thr) + AMP + diphosphate + H(+). Catalyzes the attachment of threonine to tRNA(Thr) in a two-step reaction: L-threonine is first activated by ATP to form Thr-AMP and then transferred to the acceptor end of tRNA(Thr). Also edits incorrectly charged L-seryl-tRNA(Thr). This Shewanella pealeana (strain ATCC 700345 / ANG-SQ1) protein is Threonine--tRNA ligase.